Consider the following 232-residue polypeptide: Ribonuclease 3 (232 aa).

Residues 5 to 134 (QTVLKNHFAI…FLGALLLDKD (130 aa)) form the RNase III domain. Residue glutamate 47 participates in Mg(2+) binding. The active site involves aspartate 51. Mg(2+) contacts are provided by aspartate 120 and glutamate 123. The active site involves glutamate 123. The DRBM domain maps to 160–229 (DYKTHLQELL…AKNAVEKGLD (70 aa)).

Belongs to the ribonuclease III family. As to quaternary structure, homodimer. The cofactor is Mg(2+).

The protein resides in the cytoplasm. It catalyses the reaction Endonucleolytic cleavage to 5'-phosphomonoester.. Its function is as follows. Digests double-stranded RNA. Involved in the processing of primary rRNA transcript to yield the immediate precursors to the large and small rRNAs (23S and 16S). Processes some mRNAs, and tRNAs when they are encoded in the rRNA operon. Processes pre-crRNA and tracrRNA of type II CRISPR loci if present in the organism. This chain is Ribonuclease 3, found in Streptococcus pneumoniae (strain Taiwan19F-14).